The sequence spans 238 residues: uncharacterized protein (238 aa).

This is an uncharacterized protein from Frog virus 3 (isolate Goorha) (FV-3).